A 173-amino-acid polypeptide reads, in one-letter code: 6,7-dimethyl-8-ribityllumazine synthase (173 aa).

5-amino-6-(D-ribitylamino)uracil contacts are provided by residues phenylalanine 24, 58 to 60 (ALE), and 82 to 84 (AVI). 87-88 (ET) serves as a coordination point for (2S)-2-hydroxy-3-oxobutyl phosphate. The Proton donor role is filled by histidine 90. Asparagine 115 is a 5-amino-6-(D-ribitylamino)uracil binding site. (2S)-2-hydroxy-3-oxobutyl phosphate is bound at residue arginine 129. A disordered region spans residues 150–173 (TLDQLSDDEEDEEDEDDEDEEERA). The segment covering 154–173 (LSDDEEDEEDEDDEDEEERA) has biased composition (acidic residues).

This sequence belongs to the DMRL synthase family.

It carries out the reaction (2S)-2-hydroxy-3-oxobutyl phosphate + 5-amino-6-(D-ribitylamino)uracil = 6,7-dimethyl-8-(1-D-ribityl)lumazine + phosphate + 2 H2O + H(+). The protein operates within cofactor biosynthesis; riboflavin biosynthesis; riboflavin from 2-hydroxy-3-oxobutyl phosphate and 5-amino-6-(D-ribitylamino)uracil: step 1/2. Functionally, catalyzes the formation of 6,7-dimethyl-8-ribityllumazine by condensation of 5-amino-6-(D-ribitylamino)uracil with 3,4-dihydroxy-2-butanone 4-phosphate. This is the penultimate step in the biosynthesis of riboflavin. The polypeptide is 6,7-dimethyl-8-ribityllumazine synthase (Burkholderia mallei (strain NCTC 10247)).